The chain runs to 257 residues: NAD-capped RNA hydrolase NudC (257 aa).

Arginine 69 provides a ligand contact to substrate. Zn(2+) is bound by residues cysteine 98 and cysteine 101. Glutamate 111 is a substrate binding site. Zn(2+) is bound by residues cysteine 116 and cysteine 119. Substrate is bound at residue tyrosine 124. A Nudix hydrolase domain is found at 125–248; it reads PQIAPCIIVA…TVARRLIEDT (124 aa). Residues alanine 158, glutamate 174, and glutamate 178 each contribute to the a divalent metal cation site. A Nudix box motif is present at residues 159-180; sequence GFVEVGETLEQAVAREVMEESG. 192 to 199 contributes to the substrate binding site; it reads QPWPFPQS. A divalent metal cation is bound at residue glutamate 219. Residue alanine 241 coordinates substrate.

This sequence belongs to the Nudix hydrolase family. NudC subfamily. As to quaternary structure, homodimer. Mg(2+) serves as cofactor. The cofactor is Mn(2+). Zn(2+) is required as a cofactor.

The catalysed reaction is a 5'-end NAD(+)-phospho-ribonucleoside in mRNA + H2O = a 5'-end phospho-adenosine-phospho-ribonucleoside in mRNA + beta-nicotinamide D-ribonucleotide + 2 H(+). It catalyses the reaction NAD(+) + H2O = beta-nicotinamide D-ribonucleotide + AMP + 2 H(+). It carries out the reaction NADH + H2O = reduced beta-nicotinamide D-ribonucleotide + AMP + 2 H(+). Its function is as follows. mRNA decapping enzyme that specifically removes the nicotinamide adenine dinucleotide (NAD) cap from a subset of mRNAs by hydrolyzing the diphosphate linkage to produce nicotinamide mononucleotide (NMN) and 5' monophosphate mRNA. The NAD-cap is present at the 5'-end of some mRNAs and stabilizes RNA against 5'-processing. Has preference for mRNAs with a 5'-end purine. Catalyzes the hydrolysis of a broad range of dinucleotide pyrophosphates. The sequence is that of NAD-capped RNA hydrolase NudC from Citrobacter koseri (strain ATCC BAA-895 / CDC 4225-83 / SGSC4696).